A 186-amino-acid polypeptide reads, in one-letter code: MGSSSSRRRSSSLVTKVPKPTIDDRLDQGSATNYNSNWVNYKGAWVIHIVLIAALRLIFHAIPSVSRELAWTLTNLTYMAGSFIMFHWVTGTPFEFNGGAYDRLTMWEQLDEGNQYTPARKYLLVLPIILFLMSTHYTHYNGWMFLVNIWALFMVLIPKLPAVHRKRIFGIQKLSLRDDDNDSIPR.

Transmembrane regions (helical) follow at residues 43–63 (GAWVIHIVLIAALRLIFHAIP), 69–89 (LAWTLTNLTYMAGSFIMFHWV), and 143–163 (WMFLVNIWALFMVLIPKLPAV).

The protein localises to the endoplasmic reticulum membrane. This is an uncharacterized protein from Schizosaccharomyces pombe (strain 972 / ATCC 24843) (Fission yeast).